The primary structure comprises 66 residues: UPF0337 protein SpyM3_0896 (66 aa).

The protein belongs to the UPF0337 (CsbD) family.

This is UPF0337 protein SpyM3_0896 from Streptococcus pyogenes serotype M3 (strain ATCC BAA-595 / MGAS315).